The sequence spans 98 residues: uncharacterized protein (98 aa).

The span at 19-31 shows a compositional bias: basic residues; the sequence is RRMSKRSKNKAKK. The segment at 19–47 is disordered; the sequence is RRMSKRSKNKAKKERVPVEDRPPTPMPTS.

Belongs to the lymphocryptovirus BNLF2b family.

This is an uncharacterized protein from Homo sapiens (Human).